The primary structure comprises 295 residues: Succinate dehydrogenase assembly factor 2, mitochondrial (295 aa).

Disordered regions lie at residues 35 to 90 (AKDN…PELL), 208 to 227 (PEEGTPAEDTPTETWQRTGA), and 269 to 295 (TGFHAAKNKKTGGSGLGRMPNIQVFDS). The segment covering 45–75 (STPSTAPEYRQNQTSKPPNQFMPNSTSTMTN) has biased composition (polar residues).

Belongs to the SDHAF2 family. As to quaternary structure, interacts with the flavoprotein subunit within the SDH catalytic dimer.

It localises to the mitochondrion matrix. Plays an essential role in the assembly of succinate dehydrogenase (SDH), an enzyme complex (also referred to as respiratory complex II) that is a component of both the tricarboxylic acid (TCA) cycle and the mitochondrial electron transport chain, and which couples the oxidation of succinate to fumarate with the reduction of ubiquinone (coenzyme Q) to ubiquinol. Required for flavinylation (covalent attachment of FAD) of the flavoprotein subunit of the SDH catalytic dimer. The sequence is that of Succinate dehydrogenase assembly factor 2, mitochondrial from Aspergillus terreus (strain NIH 2624 / FGSC A1156).